A 438-amino-acid chain; its full sequence is tRNA(Ile)-lysidine synthase (438 aa).

19–24 is an ATP binding site; sequence SGGIDS.

This sequence belongs to the tRNA(Ile)-lysidine synthase family.

It localises to the cytoplasm. It catalyses the reaction cytidine(34) in tRNA(Ile2) + L-lysine + ATP = lysidine(34) in tRNA(Ile2) + AMP + diphosphate + H(+). Functionally, ligates lysine onto the cytidine present at position 34 of the AUA codon-specific tRNA(Ile) that contains the anticodon CAU, in an ATP-dependent manner. Cytidine is converted to lysidine, thus changing the amino acid specificity of the tRNA from methionine to isoleucine. The sequence is that of tRNA(Ile)-lysidine synthase from Buchnera aphidicola subsp. Baizongia pistaciae (strain Bp).